Here is a 333-residue protein sequence, read N- to C-terminus: Ornithine carbamoyltransferase (333 aa).

Carbamoyl phosphate contacts are provided by residues serine 56 to threonine 59, arginine 107, and histidine 134 to glutamine 137. Residues asparagine 167, aspartate 231, and serine 235–methionine 236 each bind L-ornithine. Carbamoyl phosphate-binding positions include cysteine 273–leucine 274 and arginine 318.

This sequence belongs to the aspartate/ornithine carbamoyltransferase superfamily. OTCase family.

It localises to the cytoplasm. The enzyme catalyses carbamoyl phosphate + L-ornithine = L-citrulline + phosphate + H(+). It participates in amino-acid degradation; L-arginine degradation via ADI pathway; carbamoyl phosphate from L-arginine: step 2/2. Reversibly catalyzes the transfer of the carbamoyl group from carbamoyl phosphate (CP) to the N(epsilon) atom of ornithine (ORN) to produce L-citrulline. The polypeptide is Ornithine carbamoyltransferase (Clostridium botulinum (strain 657 / Type Ba4)).